Reading from the N-terminus, the 365-residue chain is tRNA(Met) cytidine acetate ligase (365 aa).

ATP contacts are provided by residues I7–L20, G96, N152, and R175.

It belongs to the TmcAL family.

The protein localises to the cytoplasm. It catalyses the reaction cytidine(34) in elongator tRNA(Met) + acetate + ATP = N(4)-acetylcytidine(34) in elongator tRNA(Met) + AMP + diphosphate. In terms of biological role, catalyzes the formation of N(4)-acetylcytidine (ac(4)C) at the wobble position of elongator tRNA(Met), using acetate and ATP as substrates. First activates an acetate ion to form acetyladenylate (Ac-AMP) and then transfers the acetyl group to tRNA to form ac(4)C34. This chain is tRNA(Met) cytidine acetate ligase, found in Streptococcus pneumoniae (strain Hungary19A-6).